Reading from the N-terminus, the 428-residue chain is MKIHKHAPMNGVIHIPGDKSISHRSVMFGAIANGTTVVKNFLPGADCLSTIDCFRKMGVDIEQKGTDVVIHGKGLKELKEPSDVLDVGNSGTTIRLMMGILAGCEFHSTLIGDESIAKRPMQRVTGPLKQLGAKIDGRANGEYTPLSIRGGHLKGISYESPVASAQIKSAVLLAGLQAEGTTTLTEPHKSRDHTERMLSMFGVKLDEDEQSVSIEGGQTLKATDIFVPGDISSAAFFLVAGSIVPNSRIVLKNVGLNKTRTGIIDVLKQMGANLEINEVDAKGGEPYGDLTISTSSLKGIEISGDVISRLIDEIPIIALLATQAEGTTIIKDAAELKVKETNRIDTVVSELKKLGADIEATEDGMKIHGKTPLQGGAVVSSYGDHRIGMMLGIAACITKQAVEIEDTDAVRVSYPNFFEHIEYLTKTV.

3-phosphoshikimate is bound by residues K19, S20, and R24. Position 19 (K19) interacts with phosphoenolpyruvate. Phosphoenolpyruvate contacts are provided by G91 and R119. Residues S164, Q166, D312, and K339 each coordinate 3-phosphoshikimate. Q166 is a binding site for phosphoenolpyruvate. The active-site Proton acceptor is D312. Residues R343 and R386 each coordinate phosphoenolpyruvate.

It belongs to the EPSP synthase family. Monomer.

It localises to the cytoplasm. It catalyses the reaction 3-phosphoshikimate + phosphoenolpyruvate = 5-O-(1-carboxyvinyl)-3-phosphoshikimate + phosphate. The protein operates within metabolic intermediate biosynthesis; chorismate biosynthesis; chorismate from D-erythrose 4-phosphate and phosphoenolpyruvate: step 6/7. In terms of biological role, catalyzes the transfer of the enolpyruvyl moiety of phosphoenolpyruvate (PEP) to the 5-hydroxyl of shikimate-3-phosphate (S3P) to produce enolpyruvyl shikimate-3-phosphate and inorganic phosphate. This Bacillus pumilus (strain SAFR-032) protein is 3-phosphoshikimate 1-carboxyvinyltransferase.